The primary structure comprises 122 residues: Large ribosomal subunit protein uL14 (122 aa).

Belongs to the universal ribosomal protein uL14 family. As to quaternary structure, part of the 50S ribosomal subunit. Forms a cluster with proteins L3 and L19. In the 70S ribosome, L14 and L19 interact and together make contacts with the 16S rRNA in bridges B5 and B8.

In terms of biological role, binds to 23S rRNA. Forms part of two intersubunit bridges in the 70S ribosome. In Rickettsia africae (strain ESF-5), this protein is Large ribosomal subunit protein uL14.